A 233-amino-acid chain; its full sequence is Histidinol dehydrogenase (233 aa).

Residues Ser31, Gln53, and His56 each coordinate substrate. Positions 53 and 56 each coordinate Zn(2+). Residues Glu121 and His122 each act as proton acceptor in the active site. Substrate-binding residues include His122, Asp155, Glu209, and His214. Residue Asp155 coordinates Zn(2+). His214 contributes to the Zn(2+) binding site.

Belongs to the histidinol dehydrogenase family. The cofactor is Zn(2+).

It catalyses the reaction L-histidinol + 2 NAD(+) + H2O = L-histidine + 2 NADH + 3 H(+). The protein operates within amino-acid biosynthesis; L-histidine biosynthesis; L-histidine from 5-phospho-alpha-D-ribose 1-diphosphate: step 9/9. Its function is as follows. Catalyzes the sequential NAD-dependent oxidations of L-histidinol to L-histidinaldehyde and then to L-histidine. The protein is Histidinol dehydrogenase (hisD) of Thiocapsa roseopersicina.